The chain runs to 122 residues: MSISAGISINAFDIIKPEHFNGPLLFTASTLRVHSPWFSNTFKHTVSVNYLYVPAGRPRTFPLIKFHYEFIPKKVYRRASNSFHSVENCFEQILRICIVFLSLKIYTLTLVIIKVFIRRSDA.

Residues 93–113 (ILRICIVFLSLKIYTLTLVII) form a helical membrane-spanning segment.

It localises to the membrane. This is an uncharacterized protein from Saccharomyces cerevisiae (strain ATCC 204508 / S288c) (Baker's yeast).